Consider the following 532-residue polypeptide: Zinc metalloproteinase nas-29 (532 aa).

Positions 1–22 are cleaved as a signal peptide; that stretch reads MISKNTSFCGFLILVLATCMSA. Asn5, Asn27, Asn70, and Asn106 each carry an N-linked (GlcNAc...) asparagine glycan. A propeptide spanning residues 23–134 is cleaved from the precursor; it reads QFVSNESIKL…NGESTDRTKR (112 aa). A Peptidase M12A domain is found at 135 to 335; it reads QAYLDNNYPA…HIMNQHYQCQ (201 aa). Cystine bridges form between Cys179–Cys334, Cys201–Cys222, Cys338–Cys358, Cys360–Cys369, Cys380–Cys408, and Cys435–Cys456. Residue His230 coordinates Zn(2+). The active site involves Glu231. The Zn(2+) site is built by His234 and His240. Residues 330–370 form the EGF-like domain; sequence QHYQCQEKCPTQAPCQNGGFTNSRNCKVCKCPTGFGGAYCQ. A CUB domain is found at 380–494; sequence CGGYLNAEET…VSFEYSFVST (115 aa). N-linked (GlcNAc...) asparagine glycosylation occurs at Asn503.

Requires Zn(2+) as cofactor.

The protein localises to the secreted. In terms of biological role, metalloprotease. The chain is Zinc metalloproteinase nas-29 (nas-29) from Caenorhabditis elegans.